Consider the following 263-residue polypeptide: Coiled-coil domain-containing protein 172 (263 aa).

A coiled-coil region spans residues 13 to 191 (TEHQAEESRR…LKVLKDEETE (179 aa)).

The protein belongs to the CCDC172 family. As to quaternary structure, may interact with TEKT2. As to expression, detected in spermatozoa (at protein level). Predominantly expressed in testis and in spermatozoa from the caput and corpus epididymis.

The protein resides in the cytoplasm. The protein localises to the cell projection. It localises to the cilium. This Rattus norvegicus (Rat) protein is Coiled-coil domain-containing protein 172 (Ccdc172).